The sequence spans 283 residues: Pantothenate synthetase (283 aa).

Residue 31 to 38 (MGALHEGH) coordinates ATP. Catalysis depends on H38, which acts as the Proton donor. Position 62 (Q62) interacts with (R)-pantoate. Position 62 (Q62) interacts with beta-alanine. 148–151 (GKKD) contacts ATP. Q154 is a (R)-pantoate binding site. ATP is bound by residues V177 and 185–188 (RSSR).

This sequence belongs to the pantothenate synthetase family. In terms of assembly, homodimer.

The protein localises to the cytoplasm. The catalysed reaction is (R)-pantoate + beta-alanine + ATP = (R)-pantothenate + AMP + diphosphate + H(+). The protein operates within cofactor biosynthesis; (R)-pantothenate biosynthesis; (R)-pantothenate from (R)-pantoate and beta-alanine: step 1/1. In terms of biological role, catalyzes the condensation of pantoate with beta-alanine in an ATP-dependent reaction via a pantoyl-adenylate intermediate. The polypeptide is Pantothenate synthetase (Staphylococcus haemolyticus (strain JCSC1435)).